Here is a 152-residue protein sequence, read N- to C-terminus: Large ribosomal subunit protein bL9 (152 aa).

Belongs to the bacterial ribosomal protein bL9 family.

Its function is as follows. Binds to the 23S rRNA. This chain is Large ribosomal subunit protein bL9, found in Prochlorococcus marinus (strain NATL1A).